Here is a 145-residue protein sequence, read N- to C-terminus: Endosomal/vacuolar adapter protein YPT35 (145 aa).

A PX domain is found at Ile-32–Gly-145.

Belongs to the YPT35 family.

The protein localises to the endosome membrane. Its subcellular location is the vacuole membrane. Recruits the lipid transfer protein VPS13 to endosomal and vacuolar membranes. The protein is Endosomal/vacuolar adapter protein YPT35 (YPT35) of Meyerozyma guilliermondii (strain ATCC 6260 / CBS 566 / DSM 6381 / JCM 1539 / NBRC 10279 / NRRL Y-324) (Yeast).